A 247-amino-acid polypeptide reads, in one-letter code: LOB domain-containing protein 38 (247 aa).

Residues 1-107 (MSCNGCRVLR…VETVLRGGSL (107 aa)) form the LOB domain. Over residues 157–170 (FSSSRSRSRSTASP) the composition is skewed to low complexity. Residues 157–184 (FSSSRSRSRSTASPPKRKRLSSEQQPSS) are disordered.

It belongs to the LOB domain-containing protein family. Expressed in young shoots, roots, stems, leaves and flowers.

The sequence is that of LOB domain-containing protein 38 (LBD38) from Arabidopsis thaliana (Mouse-ear cress).